The chain runs to 258 residues: Dihydroorotate dehydrogenase B (NAD(+)), electron transfer subunit (258 aa).

One can recognise an FAD-binding FR-type domain in the interval 2-100 (ILKENLTVVS…LGPQGNGFDL (99 aa)). FAD contacts are provided by residues 51 to 54 (RPIS), 68 to 70 (IYR), and 75 to 76 (GT). [2Fe-2S] cluster-binding residues include Cys-220, Cys-225, Cys-228, and Cys-244.

The protein belongs to the PyrK family. As to quaternary structure, heterotetramer of 2 PyrK and 2 PyrD type B subunits. The cofactor is [2Fe-2S] cluster. FAD serves as cofactor.

The protein operates within pyrimidine metabolism; UMP biosynthesis via de novo pathway; orotate from (S)-dihydroorotate (NAD(+) route): step 1/1. Functionally, responsible for channeling the electrons from the oxidation of dihydroorotate from the FMN redox center in the PyrD type B subunit to the ultimate electron acceptor NAD(+). This chain is Dihydroorotate dehydrogenase B (NAD(+)), electron transfer subunit, found in Streptococcus mutans serotype c (strain ATCC 700610 / UA159).